A 407-amino-acid chain; its full sequence is Phosphopentomutase (407 aa).

Mn(2+) is bound by residues aspartate 10, aspartate 306, histidine 311, aspartate 347, histidine 348, and histidine 359.

This sequence belongs to the phosphopentomutase family. It depends on Mn(2+) as a cofactor.

The protein localises to the cytoplasm. The enzyme catalyses 2-deoxy-alpha-D-ribose 1-phosphate = 2-deoxy-D-ribose 5-phosphate. The catalysed reaction is alpha-D-ribose 1-phosphate = D-ribose 5-phosphate. The protein operates within carbohydrate degradation; 2-deoxy-D-ribose 1-phosphate degradation; D-glyceraldehyde 3-phosphate and acetaldehyde from 2-deoxy-alpha-D-ribose 1-phosphate: step 1/2. Its function is as follows. Isomerase that catalyzes the conversion of deoxy-ribose 1-phosphate (dRib-1-P) and ribose 1-phosphate (Rib-1-P) to deoxy-ribose 5-phosphate (dRib-5-P) and ribose 5-phosphate (Rib-5-P), respectively. The chain is Phosphopentomutase from Photorhabdus laumondii subsp. laumondii (strain DSM 15139 / CIP 105565 / TT01) (Photorhabdus luminescens subsp. laumondii).